We begin with the raw amino-acid sequence, 444 residues long: Cobyrinate a,c-diamide synthase (444 aa).

The 189-residue stretch at 250-438 (IIAIAQDRAF…PHIHFFGSYK (189 aa)) folds into the GATase cobBQ-type domain. The active-site Nucleophile is the C332.

This sequence belongs to the CobB/CbiA family. Requires Mg(2+) as cofactor.

The catalysed reaction is cob(II)yrinate + 2 L-glutamine + 2 ATP + 2 H2O = cob(II)yrinate a,c diamide + 2 L-glutamate + 2 ADP + 2 phosphate + 2 H(+). It functions in the pathway cofactor biosynthesis; adenosylcobalamin biosynthesis; cob(II)yrinate a,c-diamide from sirohydrochlorin (anaerobic route): step 10/10. Functionally, catalyzes the ATP-dependent amidation of the two carboxylate groups at positions a and c of cobyrinate, using either L-glutamine or ammonia as the nitrogen source. In Fusobacterium nucleatum subsp. nucleatum (strain ATCC 25586 / DSM 15643 / BCRC 10681 / CIP 101130 / JCM 8532 / KCTC 2640 / LMG 13131 / VPI 4355), this protein is Cobyrinate a,c-diamide synthase.